Here is a 337-residue protein sequence, read N- to C-terminus: Heme A synthase (337 aa).

The next 5 helical transmembrane spans lie at 6–26 (ITKW…IGGI), 87–107 (FIHR…LIYF), 119–139 (LPYI…WYMV), 154–174 (LAFH…QLIK), and 192–212 (LIFS…GALV). His-256 is a heme binding site. 3 helical membrane-spanning segments follow: residues 258 to 278 (LVGY…LKIE), 285 to 305 (IAYF…LTLL), and 308 to 328 (VPII…SIII). Heme is bound at residue His-316.

The protein belongs to the COX15/CtaA family. Type 2 subfamily. As to quaternary structure, interacts with CtaB. Heme b is required as a cofactor.

It localises to the cell membrane. The catalysed reaction is Fe(II)-heme o + 2 A + H2O = Fe(II)-heme a + 2 AH2. The protein operates within porphyrin-containing compound metabolism; heme A biosynthesis; heme A from heme O: step 1/1. In terms of biological role, catalyzes the conversion of heme O to heme A by two successive hydroxylations of the methyl group at C8. The first hydroxylation forms heme I, the second hydroxylation results in an unstable dihydroxymethyl group, which spontaneously dehydrates, resulting in the formyl group of heme A. This is Heme A synthase from Rickettsia conorii (strain ATCC VR-613 / Malish 7).